The following is a 104-amino-acid chain: L-rhamnose mutarotase (104 aa).

Y18 contacts substrate. The Proton donor role is filled by H22. Substrate-binding positions include Y41 and 76 to 77; that span reads WW.

This sequence belongs to the rhamnose mutarotase family. As to quaternary structure, homodimer.

The protein resides in the cytoplasm. It carries out the reaction alpha-L-rhamnose = beta-L-rhamnose. It participates in carbohydrate metabolism; L-rhamnose metabolism. Functionally, involved in the anomeric conversion of L-rhamnose. This Shigella flexneri serotype 5b (strain 8401) protein is L-rhamnose mutarotase.